The following is a 455-amino-acid chain: tRNA modification GTPase MnmE (455 aa).

(6S)-5-formyl-5,6,7,8-tetrahydrofolate-binding residues include Arg-24, Glu-81, and Lys-120. The TrmE-type G domain occupies 216–378; the sequence is GMTVVIAGRP…LREHLKACMG (163 aa). Position 226 (Asn-226) interacts with K(+). Residues 226-231, 245-251, 270-273, 335-338, and 359-361 contribute to the GTP site; these read NAGKSS, TDIAGTT, DTAG, NKAD, and SAR. Ser-230 is a binding site for Mg(2+). 3 residues coordinate K(+): Thr-245, Ile-247, and Thr-250. Residue Thr-251 coordinates Mg(2+). Lys-455 is a binding site for (6S)-5-formyl-5,6,7,8-tetrahydrofolate.

This sequence belongs to the TRAFAC class TrmE-Era-EngA-EngB-Septin-like GTPase superfamily. TrmE GTPase family. Homodimer. Heterotetramer of two MnmE and two MnmG subunits. K(+) is required as a cofactor.

It is found in the cytoplasm. In terms of biological role, exhibits a very high intrinsic GTPase hydrolysis rate. Involved in the addition of a carboxymethylaminomethyl (cmnm) group at the wobble position (U34) of certain tRNAs, forming tRNA-cmnm(5)s(2)U34. The protein is tRNA modification GTPase MnmE of Pseudomonas aeruginosa (strain ATCC 15692 / DSM 22644 / CIP 104116 / JCM 14847 / LMG 12228 / 1C / PRS 101 / PAO1).